A 77-amino-acid polypeptide reads, in one-letter code: U14-theraphotoxin-Cg1a 2 (77 aa).

The N-terminal stretch at 1-21 (MKTSVLLVILGIAAITVQCTA) is a signal peptide. Residues 22–49 (SESVKQDSLRTFVDAVLGWNAEMASEAR) constitute a propeptide that is removed on maturation. 3 cysteine pairs are disulfide-bonded: cysteine 50–cysteine 64, cysteine 57–cysteine 69, and cysteine 63–cysteine 75. The residue at position 77 (lysine 77) is a Lysine amide.

This sequence belongs to the neurotoxin 10 (Hwtx-1) family. 65 (Jztx-21) subfamily. As to expression, expressed by the venom gland.

The protein resides in the secreted. In terms of biological role, probable ion channel inhibitor. The polypeptide is U14-theraphotoxin-Cg1a 2 (Chilobrachys guangxiensis (Chinese earth tiger tarantula)).